A 683-amino-acid polypeptide reads, in one-letter code: MSSCVNTSQTGPKKKISFIIRDEHEYSNRSAVSALQYDAQNGRLFTGGSDTIIRTWSVPHHKDAFSARGGVRSPGKNSPVQYQGSLEQHTDWVNDMILCGHGKILISASNDTTVKVWNIERDNKHGFIDCIRTHKDYVSCLAYAPIVEKAVSASFDHNIFVYDINANFKTVNNLIGCKDSIYSLATTPNLSLVLGAGTEKCIRLFDPRTNEKIMKLRGHTDNVRALVVNDDGTRALSAGSDATIRLWDIGQQRCIATCIAHEEGVWTLQVDSSFTTVYSAGKDKMVVKTPLYDFTKSQLLFKEEAPVKKLLLSEKDNPVSLWVGTWKSDIKRWSIRPSAQLSIGGDEDGPSTSNANHSVSASSSPPVTFKYIRVKDQKGQQSTPELVIPGAPAIKKHAMLSDKRHVLTRDSDGNVALYDVLAARKIKDYGKRIFEEVVDENSRQVYIPSWFVVDSKSGMLQITLDELDALSSWLSSKDAGFDDNDRETKLNYGGMMLRSLFERWPPCKMTNVDAADADDVQKATLNFISLPEHTPLIICEGNGRPLYRLLVGDAGKEFEANELAQIAPMWVIDAIERNQLPKFNKMPFYLLPHPSTNPKQPKKDRLSATEMLQVKKVMEHVYEKILSTNDDITVGSIPLNQIHTKMEMYCNDQRLEPDMDLRTVKHLYWKQSGELLLHYKPVK.

WD repeat units lie at residues 27-82 (SNRS…PVQY), 88-130 (QHTD…FIDC), 133-167 (THKD…INAN), 176-215 (GCKD…KIMK), 218-257 (GHTD…CIAT), 260-299 (AHEE…KSQL), and 302-343 (KEEA…QLSI). Residues 341 to 364 (LSIGGDEDGPSTSNANHSVSASSS) are disordered. Residues 351 to 364 (STSNANHSVSASSS) show a composition bias toward low complexity. A WD 8 repeat occupies 389-428 (PGAPAIKKHAMLSDKRHVLTRDSDGNVALYDVLAARKIKD).

This sequence belongs to the WD repeat WDR48 family. As to quaternary structure, interacts with usp-46; the interaction increases the catalytic activity of usp-46 in the presence of wdr-20. In terms of tissue distribution, expressed in several head neurons and cells in the tail including the anal depressor cell.

In terms of biological role, together with wdr-20, binds to and stimulates the activity of the deubiquitinating enzyme usp-46, leading to deubiquitination and stabilization of the glr-1 glutamate receptor. In Caenorhabditis elegans, this protein is WD repeat-containing protein 48 homolog (wdr-48).